The chain runs to 258 residues: Synapse differentiation-inducing gene protein 1 (258 aa).

At 1–181 (MDGIIEQKSV…NFLMMPPRDH (181 aa)) the chain is on the cytoplasmic side. Residue Ser137 is modified to Phosphoserine. A helical membrane pass occupies residues 182–202 (LGLSVFSMLCCFWPLGIAAFY). Residues 203–228 (LSHETNKAVAKGDFHQASTSSRRALF) lie on the Extracellular side of the membrane. The segment at residues 229–249 (LAVLSITIGTGIYVGVAVALI) is an intramembrane region (helical). Over 250 to 258 (AYLSKNNHL) the chain is Extracellular.

The protein belongs to the CD225/Dispanin family. Homodimer. Interacts with GRIA1 and GRIA2. In terms of tissue distribution, brain-specific. Expressed in Purkinje neurons in cerebellum. Also detected in the hippocampus. Found at excitatory synapses and postsynaptic cells.

The protein resides in the cell membrane. It localises to the early endosome membrane. The protein localises to the postsynaptic density membrane. It is found in the synapse. Its subcellular location is the cell projection. The protein resides in the dendrite. It localises to the dendritic spine. May regulate AMPA receptor content at nascent synapses, and have a role in postsynaptic development and maturation. The chain is Synapse differentiation-inducing gene protein 1 (Syndig1) from Mus musculus (Mouse).